Consider the following 279-residue polypeptide: Prohibitin-4, mitochondrial (279 aa).

Gly-2 carries the N-acetylglycine modification. Topologically, residues Gly-2–Val-6 are mitochondrial matrix. The chain crosses the membrane as a helical; Signal-anchor for type II membrane protein span at residues Ala-7–Leu-28. At Asn-29–Arg-279 the chain is on the mitochondrial intermembrane side.

It belongs to the prohibitin family. Component of a prohibitin multimeric complex in mitochondrial membranes. Mostly expressed in proliferative tissues, including vasculature, shoot and root apical tissues. Accumulates in dry seeds.

The protein resides in the mitochondrion inner membrane. Its function is as follows. Prohibitin probably acts as a holdase/unfoldase for the stabilization of newly synthesized mitochondrial proteins. The sequence is that of Prohibitin-4, mitochondrial (PHB4) from Arabidopsis thaliana (Mouse-ear cress).